A 131-amino-acid chain; its full sequence is Small ribosomal subunit protein uS8 (131 aa).

The protein belongs to the universal ribosomal protein uS8 family. Part of the 30S ribosomal subunit. Contacts proteins S5 and S12.

One of the primary rRNA binding proteins, it binds directly to 16S rRNA central domain where it helps coordinate assembly of the platform of the 30S subunit. The chain is Small ribosomal subunit protein uS8 from Burkholderia mallei (strain NCTC 10247).